A 334-amino-acid chain; its full sequence is Phosphate acyltransferase (334 aa).

This sequence belongs to the PlsX family. Homodimer. Probably interacts with PlsY.

The protein localises to the cytoplasm. It carries out the reaction a fatty acyl-[ACP] + phosphate = an acyl phosphate + holo-[ACP]. Its pathway is lipid metabolism; phospholipid metabolism. In terms of biological role, catalyzes the reversible formation of acyl-phosphate (acyl-PO(4)) from acyl-[acyl-carrier-protein] (acyl-ACP). This enzyme utilizes acyl-ACP as fatty acyl donor, but not acyl-CoA. This is Phosphate acyltransferase from Clostridium kluyveri (strain NBRC 12016).